The primary structure comprises 551 residues: Glucans biosynthesis protein D (551 aa).

Positions 1-32 (MDRRRFIKGSMAMAAVCGTSGIASLFSQAAFA) form a signal peptide, tat-type signal.

Belongs to the OpgD/OpgG family. Post-translationally, predicted to be exported by the Tat system. The position of the signal peptide cleavage has not been experimentally proven.

The protein localises to the periplasm. It participates in glycan metabolism; osmoregulated periplasmic glucan (OPG) biosynthesis. Probably involved in the control of the structural glucose backbone of osmoregulated periplasmic glucans (OPGs). This Escherichia coli O127:H6 (strain E2348/69 / EPEC) protein is Glucans biosynthesis protein D.